A 117-amino-acid polypeptide reads, in one-letter code: Large ribosomal subunit protein bL20 (117 aa).

The protein belongs to the bacterial ribosomal protein bL20 family.

Functionally, binds directly to 23S ribosomal RNA and is necessary for the in vitro assembly process of the 50S ribosomal subunit. It is not involved in the protein synthesizing functions of that subunit. The chain is Large ribosomal subunit protein bL20 from Ruminiclostridium cellulolyticum (strain ATCC 35319 / DSM 5812 / JCM 6584 / H10) (Clostridium cellulolyticum).